Consider the following 225-residue polypeptide: Biosynthetic peptidoglycan transglycosylase (225 aa).

Residues 8–28 (VLLIFIGAILLIQLWIFSSLV) form a helical membrane-spanning segment.

This sequence belongs to the glycosyltransferase 51 family.

The protein localises to the cell inner membrane. It catalyses the reaction [GlcNAc-(1-&gt;4)-Mur2Ac(oyl-L-Ala-gamma-D-Glu-L-Lys-D-Ala-D-Ala)](n)-di-trans,octa-cis-undecaprenyl diphosphate + beta-D-GlcNAc-(1-&gt;4)-Mur2Ac(oyl-L-Ala-gamma-D-Glu-L-Lys-D-Ala-D-Ala)-di-trans,octa-cis-undecaprenyl diphosphate = [GlcNAc-(1-&gt;4)-Mur2Ac(oyl-L-Ala-gamma-D-Glu-L-Lys-D-Ala-D-Ala)](n+1)-di-trans,octa-cis-undecaprenyl diphosphate + di-trans,octa-cis-undecaprenyl diphosphate + H(+). It participates in cell wall biogenesis; peptidoglycan biosynthesis. Functionally, peptidoglycan polymerase that catalyzes glycan chain elongation from lipid-linked precursors. This chain is Biosynthetic peptidoglycan transglycosylase, found in Acinetobacter baumannii (strain AB307-0294).